The primary structure comprises 273 residues: Dermonecrotic toxin LruSicTox-alphaIC1c (273 aa).

Histidine 5 is a catalytic residue. Mg(2+) contacts are provided by glutamate 25 and aspartate 27. Histidine 41 functions as the Nucleophile in the catalytic mechanism. Disulfide bonds link cysteine 45/cysteine 51 and cysteine 47/cysteine 190. Aspartate 85 is a binding site for Mg(2+).

This sequence belongs to the arthropod phospholipase D family. Class II subfamily. Mg(2+) is required as a cofactor. As to expression, expressed by the venom gland.

The protein resides in the secreted. It catalyses the reaction an N-(acyl)-sphingosylphosphocholine = an N-(acyl)-sphingosyl-1,3-cyclic phosphate + choline. It carries out the reaction an N-(acyl)-sphingosylphosphoethanolamine = an N-(acyl)-sphingosyl-1,3-cyclic phosphate + ethanolamine. The enzyme catalyses a 1-acyl-sn-glycero-3-phosphocholine = a 1-acyl-sn-glycero-2,3-cyclic phosphate + choline. The catalysed reaction is a 1-acyl-sn-glycero-3-phosphoethanolamine = a 1-acyl-sn-glycero-2,3-cyclic phosphate + ethanolamine. Dermonecrotic toxins cleave the phosphodiester linkage between the phosphate and headgroup of certain phospholipids (sphingolipid and lysolipid substrates), forming an alcohol (often choline) and a cyclic phosphate. This toxin acts on sphingomyelin (SM). It may also act on ceramide phosphoethanolamine (CPE), lysophosphatidylcholine (LPC) and lysophosphatidylethanolamine (LPE), but not on lysophosphatidylserine (LPS), and lysophosphatidylglycerol (LPG). It acts by transphosphatidylation, releasing exclusively cyclic phosphate products as second products. Induces dermonecrosis, hemolysis, increased vascular permeability, edema, inflammatory response, and platelet aggregation. The chain is Dermonecrotic toxin LruSicTox-alphaIC1c from Loxosceles rufescens (Mediterranean recluse spider).